The chain runs to 284 residues: Protease HtpX homolog (284 aa).

A run of 2 helical transmembrane segments spans residues 7–26 (TYLL…MMLH) and 33–47 (IILA…YYMS). Position 129 (histidine 129) interacts with Zn(2+). The active site involves glutamate 130. Residue histidine 133 participates in Zn(2+) binding. Helical transmembrane passes span 148–168 (LAGA…IFFV) and 180–200 (IGTI…QFAI). Residue glutamate 205 coordinates Zn(2+).

Belongs to the peptidase M48B family. It depends on Zn(2+) as a cofactor.

Its subcellular location is the cell membrane. This Methanocaldococcus jannaschii (strain ATCC 43067 / DSM 2661 / JAL-1 / JCM 10045 / NBRC 100440) (Methanococcus jannaschii) protein is Protease HtpX homolog.